Here is a 98-residue protein sequence, read N- to C-terminus: Large ribosomal subunit protein eL21 (98 aa).

The protein belongs to the eukaryotic ribosomal protein eL21 family.

The protein is Large ribosomal subunit protein eL21 of Korarchaeum cryptofilum (strain OPF8).